Reading from the N-terminus, the 447-residue chain is Probable rhamnogalacturonase C (447 aa).

An N-terminal signal peptide occupies residues 1–19 (MQVKLFYTLALWAPILVSA). Asn-37 and Asn-65 each carry an N-linked (GlcNAc...) asparagine glycan. A disulfide bridge links Cys-40 with Cys-66. The active-site Proton donor is Asp-217. The cysteines at positions 219 and 236 are disulfide-linked. 2 N-linked (GlcNAc...) asparagine glycosylation sites follow: Asn-237 and Asn-252. The active site involves His-291. Asn-316 carries an N-linked (GlcNAc...) asparagine glycan. Intrachain disulfides connect Cys-338–Cys-344 and Cys-366–Cys-375.

It belongs to the glycosyl hydrolase 28 family.

Its subcellular location is the secreted. In terms of biological role, pectinolytic enzymes consist of four classes of enzymes: pectine lyase, polygalacturonase, pectin methylesterase and rhamnogalacturonase. Hydrolyzes alpha-D-galacturonopyranosyl-(1,2)-alpha-L-rhamnopyranosyl linkages in the backbone of the hairy regions of pectins. This Aspergillus flavus (strain ATCC 200026 / FGSC A1120 / IAM 13836 / NRRL 3357 / JCM 12722 / SRRC 167) protein is Probable rhamnogalacturonase C (rhgC).